The following is a 514-amino-acid chain: MSEKEEAPSTSKSTGAPSRPTLSLPPRPFSEMFFNGGVGFSPGPMTLVSNMFPDSDEFRSFSQLLAGAMSSPATAAAAAAAATASDYQRLGEGTNSSSGDVDPRFKQNRPTGLMISQSQSPSMFTVPPGLSPAMLLDSPSFLGLFSPVQGSYGMTHQQALAQVTAQAVQANANMQPQTEYPPPSQVQSFSSGQAQIPTSAPLPAQRETSDVTIIEHRSQQPLNVDKPADDGYNWRKYGQKQVKGSEFPRSYYKCTNPGCPVKKKVERSLDGQVTEIIYKGQHNHEPPQNTKRGNKDNTANINGSSINNNRGSSELGASQFQTNSSNKTKREQHEAVSQATTTEHLSEASDGEEVGNGETDVREKDENEPDPKRRSTEVRISEPAPAASHRTVTEPRIIVQTTSEVDLLDDGYRWRKYGQKVVKGNPYPRSYYKCTTPGCGVRKHVERAATDPKAVVTTYEGKHNHDLPAAKSSSHAAAAAQLRPDNRPGGLANLNQQQQQQPVARLRLKEEQTT.

Disordered regions lie at residues 1-28 (MSEK…PPRP), 175-204 (QPQT…PLPA), and 278-394 (YKGQ…TVTE). Polar residues-rich tracts occupy residues 185–198 (QVQS…QIPT) and 286–299 (PPQN…DNTA). Residues 223-287 (NVDKPADDGY…YKGQHNHEPP (65 aa)) constitute a DNA-binding region (WRKY 1). The span at 300-313 (NINGSSINNNRGSS) shows a compositional bias: low complexity. Residues 315-326 (LGASQFQTNSSN) are compositionally biased toward polar residues. Residues 359–380 (TDVREKDENEPDPKRRSTEVRI) are compositionally biased toward basic and acidic residues. Positions 403–468 (SEVDLLDDGY…YEGKHNHDLP (66 aa)) form a DNA-binding region, WRKY 2. Residues Cys434, Thr436, Cys439, His463, and His465 each coordinate Zn(2+). The segment at 464–514 (NHDLPAAKSSSHAAAAAQLRPDNRPGGLANLNQQQQQQPVARLRLKEEQTT) is disordered. Positions 469–480 (AAKSSSHAAAAA) are enriched in low complexity.

In terms of tissue distribution, in young, mature and senescent leaves.

The protein resides in the nucleus. In terms of biological role, transcription factor that binds specifically to the W box (5'-(T)TGAC[CT]-3'), a frequently occurring elicitor-responsive cis-acting element. Has a positive role in resistance to necrotrophic pathogens (e.g. Botrytis cinerea), but a negative effect on plant resistance to biotrophic pathogens (e.g. Pseudomonas syringae). This chain is Probable WRKY transcription factor 4 (WRKY4), found in Arabidopsis thaliana (Mouse-ear cress).